The primary structure comprises 260 residues: Circadian clock-controlled protein daywake (260 aa).

An N-terminal signal peptide occupies residues 1-25 (MQLTSASVCLLWMGLLSWVSHRIDA).

It belongs to the TO family.

Functionally, component of the circadian clock or downstream effector of clock function. Required for suppressing daytime sleep (siesta) under ambient environmental temperatures. Part of a heat avoidance mechanism that modulates daytime sleep behavior under different environmental temperatures to minimize the risk of heat exposure. Under cooler ambient temperatures, suppresses daytime sleep (siesta) and thus allows for longer periods of daytime activity. In Drosophila yakuba (Fruit fly), this protein is Circadian clock-controlled protein daywake.